The sequence spans 393 residues: Beta-ureidopropionase (393 aa).

A CN hydrolase domain is found at 72 to 344 (VRVGLVQNRI…DGLLVTELNL (273 aa)). The active-site Proton acceptor is the Glu-119. Lys-196 acts as the Proton donor in catalysis. Residue Cys-233 is the Nucleophile of the active site. At Ser-378 the chain carries Phosphoserine.

It belongs to the carbon-nitrogen hydrolase superfamily. BUP family. In terms of assembly, homodimer, homotetramer, homooctamer; can also form higher homooligomers. Post-translationally, the N-terminus is blocked. In terms of tissue distribution, detected in liver (at protein level).

Its subcellular location is the cytoplasm. The catalysed reaction is 3-(carbamoylamino)propanoate + H2O + 2 H(+) = beta-alanine + NH4(+) + CO2. The enzyme catalyses 3-(carbamoylamino)-2-methylpropanoate + H2O + 2 H(+) = (R)-3-amino-2-methylpropanoate + NH4(+) + CO2. It participates in amino-acid biosynthesis; beta-alanine biosynthesis. With respect to regulation, allosteric enzyme with positive cooperativity toward the substrate N-carbamoyl-beta-alanine at low substrate concentrations (below 12 nM). Displays no cooperativity at substrate levels above 12 nM. Functionally, catalyzes a late step in pyrimidine degradation. Converts N-carbamoyl-beta-alanine (3-ureidopropanoate) into beta-alanine, ammonia and carbon dioxide. Likewise, converts N-carbamoyl-beta-aminoisobutyrate (3-ureidoisobutyrate) into beta-aminoisobutyrate, ammonia and carbon dioxide. The protein is Beta-ureidopropionase (Upb1) of Rattus norvegicus (Rat).